The sequence spans 883 residues: DNA mismatch repair protein MutS (883 aa).

Residues 1-25 (MSDSVAPDVPVIREGKNPAQHRDRT) are disordered. The span at 11 to 25 (VIREGKNPAQHRDRT) shows a compositional bias: basic and acidic residues. 664 to 671 (GPNASGKS) lines the ATP pocket. The interval 857–883 (RKGNTQPRARKSSAETEAKTQQFELPF) is disordered.

It belongs to the DNA mismatch repair MutS family.

Functionally, this protein is involved in the repair of mismatches in DNA. It is possible that it carries out the mismatch recognition step. This protein has a weak ATPase activity. In Acaryochloris marina (strain MBIC 11017), this protein is DNA mismatch repair protein MutS.